Here is a 591-residue protein sequence, read N- to C-terminus: Aspartate--tRNA ligase (591 aa).

L-aspartate is bound at residue E173. Residues Q197–K200 are aspartate. Residue R219 participates in L-aspartate binding. ATP contacts are provided by residues R219–E221 and Q228. An L-aspartate-binding site is contributed by H448. An ATP-binding site is contributed by E482. R489 is a binding site for L-aspartate. Residue G534–R537 coordinates ATP.

Belongs to the class-II aminoacyl-tRNA synthetase family. Type 1 subfamily. As to quaternary structure, homodimer.

Its subcellular location is the cytoplasm. It catalyses the reaction tRNA(Asp) + L-aspartate + ATP = L-aspartyl-tRNA(Asp) + AMP + diphosphate. Its function is as follows. Catalyzes the attachment of L-aspartate to tRNA(Asp) in a two-step reaction: L-aspartate is first activated by ATP to form Asp-AMP and then transferred to the acceptor end of tRNA(Asp). The chain is Aspartate--tRNA ligase from Shewanella amazonensis (strain ATCC BAA-1098 / SB2B).